The following is a 188-amino-acid chain: Photosystem I assembly protein Ycf4 (188 aa).

2 helical membrane passes run 28–48 (WATVITIGGTGFFLAGLSSYL) and 68–88 (IAIGFYGVAALLLAIYLWATI).

It belongs to the Ycf4 family.

Its subcellular location is the cellular thylakoid membrane. Functionally, seems to be required for the assembly of the photosystem I complex. The protein is Photosystem I assembly protein Ycf4 of Cyanothece sp. (strain PCC 7425 / ATCC 29141).